A 378-amino-acid polypeptide reads, in one-letter code: Succinyl-diaminopimelate desuccinylase (378 aa).

Histidine 77 contributes to the Zn(2+) binding site. The active site involves aspartate 79. Residue aspartate 108 participates in Zn(2+) binding. Residue glutamate 138 is the Proton acceptor of the active site. Zn(2+) is bound by residues glutamate 139, glutamate 167, and histidine 350.

It belongs to the peptidase M20A family. DapE subfamily. Homodimer. Zn(2+) is required as a cofactor. Requires Co(2+) as cofactor.

The enzyme catalyses N-succinyl-(2S,6S)-2,6-diaminopimelate + H2O = (2S,6S)-2,6-diaminopimelate + succinate. The protein operates within amino-acid biosynthesis; L-lysine biosynthesis via DAP pathway; LL-2,6-diaminopimelate from (S)-tetrahydrodipicolinate (succinylase route): step 3/3. Functionally, catalyzes the hydrolysis of N-succinyl-L,L-diaminopimelic acid (SDAP), forming succinate and LL-2,6-diaminopimelate (DAP), an intermediate involved in the bacterial biosynthesis of lysine and meso-diaminopimelic acid, an essential component of bacterial cell walls. The protein is Succinyl-diaminopimelate desuccinylase of Erythrobacter litoralis (strain HTCC2594).